The following is a 234-amino-acid chain: Orotidine 5'-phosphate decarboxylase (234 aa).

Substrate-binding positions include D10, K31, D58 to T67, T121, R183, Q192, G212, and R213. K60 acts as the Proton donor in catalysis.

This sequence belongs to the OMP decarboxylase family. Type 1 subfamily. Homodimer.

The enzyme catalyses orotidine 5'-phosphate + H(+) = UMP + CO2. It participates in pyrimidine metabolism; UMP biosynthesis via de novo pathway; UMP from orotate: step 2/2. Functionally, catalyzes the decarboxylation of orotidine 5'-monophosphate (OMP) to uridine 5'-monophosphate (UMP). This chain is Orotidine 5'-phosphate decarboxylase, found in Halalkalibacterium halodurans (strain ATCC BAA-125 / DSM 18197 / FERM 7344 / JCM 9153 / C-125) (Bacillus halodurans).